A 104-amino-acid polypeptide reads, in one-letter code: L-rhamnose mutarotase (104 aa).

Substrate is bound at residue Tyr-18. Residue His-22 is the Proton donor of the active site. Residues Tyr-41 and 76–77 each bind substrate; that span reads WW.

The protein belongs to the rhamnose mutarotase family. Homodimer.

It is found in the cytoplasm. The enzyme catalyses alpha-L-rhamnose = beta-L-rhamnose. It functions in the pathway carbohydrate metabolism; L-rhamnose metabolism. Functionally, involved in the anomeric conversion of L-rhamnose. This Acidiphilium cryptum (strain JF-5) protein is L-rhamnose mutarotase.